Consider the following 135-residue polypeptide: Transcriptional activator protein (135 aa).

The short motif at 17–32 (KVQHKIAKKKPIRRKR) is the Nuclear localization signal element. A zinc finger spans residues 37–54 (CGCSYYLHLNCNNHGFTH). Polar residues-rich tracts occupy residues 77 to 87 (LFQDNRTQPEA) and 101 to 115 (IQPQHQEGNGDSQMF). Positions 77 to 117 (LFQDNRTQPEAISNEPRHHFHSDKIQPQHQEGNGDSQMFSR) are disordered. The segment at 120–135 (NLDDITASDWSFLKSI) is transactivation.

The protein belongs to the geminiviridae transcriptional activator protein family. Monomer. Homodimer. Homooligomer. Self-interaction correlates with nuclear localization and efficient activation of transcription. Monomers suppress local silencing by interacting with and inactivating host adenosine kinase 2 (ADK2) in the cytoplasm. Interacts with and inhibits host SNF1 kinase. Binds to ssDNA. May interact with host RPS27A. In terms of processing, phosphorylated.

The protein localises to the host nucleus. It localises to the host cytoplasm. Its function is as follows. Multifunctional protein that modulates host antiviral defenses and promotes host attractiveness to insect vectors. Acts as a suppressor of RNA-mediated gene silencing, also known as post-transcriptional gene silencing (PTGS), a mechanism of plant viral defense that limits the accumulation of viral RNAs. TrAP suppresses the host RNA silencing by inhibiting adenosine kinase 2 (ADK2), a kinase involved in a general methylation pathway. Also suppresses the host basal defense by interacting with and inhibiting SNF1 kinase, a key regulator of cell metabolism implicated in innate antiviral defense. In terms of biological role, inhibits signal transduction by the phytohormone jasmonate, making the infected plant more attractive to aphids, which are the second host to play a role as a dissemination vector. Acts by binding to ubiquitin precursor RPS27A, thereby preventing ubiquitin degradation of JAZ. This Tomato yellow leaf curl virus (strain Israel) (TYLCV) protein is Transcriptional activator protein.